The sequence spans 1033 residues: Calcium-transporting ATPase 3, plasma membrane-type (1033 aa).

Residues 1–180 are Cytoplasmic-facing; sequence MHSGVNGCCP…FVWEALEDTT (180 aa). 2 helical membrane passes run 181-201 and 204-224; these read LIIL…TEGW and GAHD…VTGT. Topologically, residues 225–268 are cytoplasmic; that stretch reads SNYQQSLQFRDLDKEKRKILVQVTRNGLRQRVLIDDLLPGDAVH. Transmembrane regions (helical) follow at residues 269-289 and 362-382; these read LAVG…SVLV and IGKI…QGII. Over 383-405 the chain is Cytoplasmic; that stretch reads GQKYLDGLLLSWSGDDVLEILDH. Residues 406–426 form a helical membrane-spanning segment; that stretch reads FAVAVTIVVVAVPEGLPLAVT. Asp461 (4-aspartylphosphate intermediate) is an active-site residue. Asp762 and Asp766 together coordinate Mg(2+). A helical transmembrane segment spans residues 823–843; sequence FQLTVNVVALLVNFTSACFTG. Over 844-846 the chain is Cytoplasmic; it reads DAP. Helical transmembrane passes span 847–867 and 928–948; these read LTAV…ALAL and IVLN…NEIS. At 949-965 the chain is on the cytoplasmic side; it reads SREMEDINVLRGMAGNS. The next 2 helical transmembrane spans lie at 966–986 and 999–1019; these read IFLG…QFLG and WLIS…IKLI. The Cytoplasmic portion of the chain corresponds to 1020 to 1033; the sequence is AVEPHEKADTRRTP.

Belongs to the cation transport ATPase (P-type) (TC 3.A.3) family. Type IIB subfamily.

It is found in the membrane. The enzyme catalyses Ca(2+)(in) + ATP + H2O = Ca(2+)(out) + ADP + phosphate + H(+). Its activity is regulated as follows. Activated by calmodulin. Its function is as follows. This magnesium-dependent enzyme catalyzes the hydrolysis of ATP coupled with the translocation of calcium from the cytosol out of the cell, into the endoplasmic reticulum, or into organelles. The sequence is that of Calcium-transporting ATPase 3, plasma membrane-type from Oryza sativa subsp. japonica (Rice).